A 271-amino-acid polypeptide reads, in one-letter code: uncharacterized protein (271 aa).

This is an uncharacterized protein from Human cytomegalovirus (strain Merlin) (HHV-5).